A 663-amino-acid polypeptide reads, in one-letter code: uncharacterized protein (663 aa).

The N-terminal stretch at 1–29 is a signal peptide; that stretch reads MLDIGVIGRLKFATAFMAMSLLLVPAAEA.

Belongs to the bacterial solute-binding protein 5 family.

The protein localises to the periplasm. Possible binding-protein with either a transport or enzymatic activity. This is an uncharacterized protein from Sinorhizobium fredii (strain NBRC 101917 / NGR234).